A 351-amino-acid chain; its full sequence is MATPNCLILWVLLIADTVWTQSVRQAYEIQDPEDWDVHDDFYCPRECFCPPSFPTALYCENRGLTEIPPIPSRIWYLYLENNLIESIPEKPFENATQLRWINLNKNKITNYGIEKGALSQLKKLLFLFLEDNELEEVPSPLPRSLEQLQLARNKVSRIPQGTFSNLENLTLLDLQHNKLLDNAFQRDTFKGLKNLMQLNMAKNALRNMPPRLPANTMQLFLDNNSIEGIPENYFNVIPKVAFLRLNHNKLSDAGLPSRGFDVSSILDLQLSYNQLTNFPRINANLQHLHLDHNKIKNVNMSVICPTTLRAEQDAFIHGPQLSYLRLDGNEIKPPIPIDLVACFKLLQAFII.

A signal peptide spans 1-20 (MATPNCLILWVLLIADTVWT). Residues 34–72 (DWDVHDDFYCPRECFCPPSFPTALYCENRGLTEIPPIPS) enclose the LRRNT domain. Disulfide bonds link C43–C49 and C47–C59. LRR repeat units lie at residues 73–94 (RIWY…PFEN), 97–118 (QLRW…KGAL), 123–143 (KLLF…PLPR), 144–165 (SLEQ…TFSN), 168–181 (NLTL…KLLD), 194–214 (NLMQ…RLPA), 215–236 (NTMQ…YFNV), 239–259 (KVAF…PSRG), 264–283 (SILD…RINA), and 284–305 (NLQH…VICP). N94 carries an N-linked (GlcNAc...) (keratan sulfate) asparagine glycan. N-linked (GlcNAc...) (keratan sulfate) asparagine glycosylation occurs at N168. The N-linked (GlcNAc...) asparagine glycan is linked to N223. Residue N299 is glycosylated (N-linked (GlcNAc...) asparagine). C304 and C342 are joined by a disulfide.

This sequence belongs to the small leucine-rich proteoglycan (SLRP) family. SLRP class II subfamily. Binds keratan sulfate chains. In terms of tissue distribution, selectively expressed in cornea of adult where it is detected in keratocytes but not in scleral cells. In embryo, first detected in periocular mesenchymal cells migrating toward developing cornea on 13.5 dpc; expression gradually restricted to corneal stromal cells on 14.5 to 18.5 dpc. Detected in scleral cells of 15.5 dpc but not in 18.5 dpc embryos.

The protein resides in the secreted. Its subcellular location is the extracellular space. It is found in the extracellular matrix. Functionally, may be important in developing and maintaining corneal transparency and for the structure of the stromal matrix. This is Keratocan (Kera) from Mus musculus (Mouse).